Here is a 184-residue protein sequence, read N- to C-terminus: dCTP deaminase (184 aa).

DCTP-binding positions include 107–112 (KSTYAR), 131–133 (TLE), glutamine 152, tyrosine 166, and glutamine 176. Glutamate 133 (proton donor/acceptor) is an active-site residue.

It belongs to the dCTP deaminase family. Homotrimer.

The enzyme catalyses dCTP + H2O + H(+) = dUTP + NH4(+). Its pathway is pyrimidine metabolism; dUMP biosynthesis; dUMP from dCTP (dUTP route): step 1/2. In terms of biological role, catalyzes the deamination of dCTP to dUTP. In Paramagnetospirillum magneticum (strain ATCC 700264 / AMB-1) (Magnetospirillum magneticum), this protein is dCTP deaminase.